Reading from the N-terminus, the 316-residue chain is MMLPTIVEWSEPDQKILLEPYTYLGINTDKELPAMVTRAFNHWYQVPQPALDIILKIVGPIHVASLLIDDIQDDSDLRKGKPVAHTVYGVAQTINTATYVFFDAYRNISKLTPFLKSPEITDLGSIIDDEIMALHRGQGKDLYWRDSLICPTEEEYLRMIHNKTGAMFRLPIKLLQALSPVESLPDCFPLVNIIGILAQIQNDLLSLSREFTEDKGFCEDFSEGKFSFPIIHAIKADSSNSLLMDILRSRPKDEATKRKALRYMNDQTKSLDHAFKVIRKLEKIAKEEIEKLGGNPELSSIFELIHFSSTPEIDDQ.

Mg(2+) contacts are provided by aspartate 69 and aspartate 73.

The protein belongs to the FPP/GGPP synthase family. The cofactor is Mg(2+).

It catalyses the reaction (2E)-geranyl diphosphate + H2O = linalool + diphosphate. The catalysed reaction is (2E,6E)-farnesyl diphosphate + H2O = (6E)-nerolidol + diphosphate. Terpene synthase that shows monoterpene synthase activity and produces linalool, using geranyl diphosphate (GPP) as substrate. Also shows sesquiterpene synthase activity as it is able to convert farnesyl diphosphate (FPP) into (E)-nerolidol. The protein is IDS-like terpene synthase 2 of Melampsora larici-populina (strain 98AG31 / pathotype 3-4-7) (Poplar leaf rust fungus).